The chain runs to 208 residues: MAQGNLYILSAPSGAGKSSLISALLNQQQDNKMMVSVSHTTRQPRPGEQEGVHYYFVSVEAFESLIEQDLFLEYAKVFGGNYYGTSLPAIEENLAKGIDVFLDIDWQGAQQIRQKVPNVKSIFILPPSLAELERRLIGRGQDSTEVIAARMSKAIDEISHYNEYDYVIVNDVFEQALADFQAILRAERLTLTHQQKQNQALIEQLLAK.

The Guanylate kinase-like domain maps to 4-185; sequence GNLYILSAPS…ALADFQAILR (182 aa). Position 11 to 18 (11 to 18) interacts with ATP; the sequence is APSGAGKS.

The protein belongs to the guanylate kinase family.

Its subcellular location is the cytoplasm. It carries out the reaction GMP + ATP = GDP + ADP. Functionally, essential for recycling GMP and indirectly, cGMP. The chain is Guanylate kinase (gmk) from Pasteurella multocida (strain Pm70).